The following is an 83-amino-acid chain: High-potential iron-sulfur protein (83 aa).

C43, C46, C61, and C75 together coordinate [4Fe-4S] cluster.

Belongs to the high-potential iron-sulfur protein (HiPIP) family. In terms of assembly, homodimer.

It localises to the periplasm. In terms of biological role, specific class of high-redox-potential 4Fe-4S ferredoxins. Functions in anaerobic electron transport in most purple and in some other photosynthetic bacteria and in at least one genus (Paracoccus) of halophilic, denitrifying bacteria. The sequence is that of High-potential iron-sulfur protein (hip) from Marichromatium gracile (Chromatium gracile).